The following is a 450-amino-acid chain: 23S rRNA (uracil(1939)-C(5))-methyltransferase RlmD (450 aa).

One can recognise a TRAM domain in the interval 1–62 (MPVAGPLDIV…PSYEQAGVVN (62 aa)). Residues Cys75, Cys81, Cys84, and Cys163 each contribute to the [4Fe-4S] cluster site. Positions 271, 300, 305, 321, 349, and 370 each coordinate S-adenosyl-L-methionine. The active-site Nucleophile is the Cys406.

It belongs to the class I-like SAM-binding methyltransferase superfamily. RNA M5U methyltransferase family. RlmD subfamily.

The catalysed reaction is uridine(1939) in 23S rRNA + S-adenosyl-L-methionine = 5-methyluridine(1939) in 23S rRNA + S-adenosyl-L-homocysteine + H(+). Functionally, catalyzes the formation of 5-methyl-uridine at position 1939 (m5U1939) in 23S rRNA. The sequence is that of 23S rRNA (uracil(1939)-C(5))-methyltransferase RlmD from Ralstonia pickettii (strain 12J).